A 248-amino-acid polypeptide reads, in one-letter code: MTTAENRARLVLGNWKMHGNLAENAALLAELRAADAAAHCEMGVCVPFPYLAQTAAALQGSAIGWGAQDVSAHAKGAYTGEVAAPMLAEFGCRWVLVGHSERRTLHAESDQLVADKARAALEAGLTPVVCVGESLQEREGGNTLGVIERQLEPVLALGRDALVRMVLAYEPVWAIGTGRTASPEQAQEVHSAIRVALDGLQASQVRVLYGGSVKGANAASLFAMPDIDGGLVGGASLVAEEFLRIAAA.

Position 14-16 (14-16) interacts with substrate; the sequence is NWK. His-99 acts as the Electrophile in catalysis. Glu-170 functions as the Proton acceptor in the catalytic mechanism. Residues Gly-176, Ser-212, and 233 to 234 contribute to the substrate site; that span reads GG.

This sequence belongs to the triosephosphate isomerase family. As to quaternary structure, homodimer.

Its subcellular location is the cytoplasm. The enzyme catalyses D-glyceraldehyde 3-phosphate = dihydroxyacetone phosphate. It functions in the pathway carbohydrate biosynthesis; gluconeogenesis. Its pathway is carbohydrate degradation; glycolysis; D-glyceraldehyde 3-phosphate from glycerone phosphate: step 1/1. Its function is as follows. Involved in the gluconeogenesis. Catalyzes stereospecifically the conversion of dihydroxyacetone phosphate (DHAP) to D-glyceraldehyde-3-phosphate (G3P). The protein is Triosephosphate isomerase of Bordetella bronchiseptica (strain ATCC BAA-588 / NCTC 13252 / RB50) (Alcaligenes bronchisepticus).